A 476-amino-acid polypeptide reads, in one-letter code: Dihydrolipoyl dehydrogenase (476 aa).

Residues 36–45 (EHQERLGGVC), K54, and A117 each bind FAD. C45 and C50 are oxidised to a cystine. NAD(+) contacts are provided by residues 182–186 (GGGII), D205, V238, and 271–274 (AIGR). FAD is bound by residues D314 and A322. H446 functions as the Proton acceptor in the catalytic mechanism.

It belongs to the class-I pyridine nucleotide-disulfide oxidoreductase family. Homodimer. The cofactor is FAD.

It is found in the cytoplasm. It carries out the reaction N(6)-[(R)-dihydrolipoyl]-L-lysyl-[protein] + NAD(+) = N(6)-[(R)-lipoyl]-L-lysyl-[protein] + NADH + H(+). Its function is as follows. Lipoamide dehydrogenase is a component of the alpha-ketoacid dehydrogenase complexes. The chain is Dihydrolipoyl dehydrogenase (lpdA) from Buchnera aphidicola subsp. Schizaphis graminum (strain Sg).